A 338-amino-acid polypeptide reads, in one-letter code: 5-dehydro-2-deoxygluconokinase (338 aa).

It belongs to the carbohydrate kinase PfkB family.

The catalysed reaction is 5-dehydro-2-deoxy-D-gluconate + ATP = 6-phospho-5-dehydro-2-deoxy-D-gluconate + ADP + H(+). It functions in the pathway polyol metabolism; myo-inositol degradation into acetyl-CoA; acetyl-CoA from myo-inositol: step 5/7. Catalyzes the phosphorylation of 5-dehydro-2-deoxy-D-gluconate (2-deoxy-5-keto-D-gluconate or DKG) to 6-phospho-5-dehydro-2-deoxy-D-gluconate (DKGP). This chain is 5-dehydro-2-deoxygluconokinase, found in Clostridium perfringens (strain ATCC 13124 / DSM 756 / JCM 1290 / NCIMB 6125 / NCTC 8237 / Type A).